A 139-amino-acid polypeptide reads, in one-letter code: Large ribosomal subunit protein bL17 (139 aa).

A disordered region spans residues Asp-117 to Gly-139.

This sequence belongs to the bacterial ribosomal protein bL17 family. In terms of assembly, part of the 50S ribosomal subunit. Contacts protein L32.

The sequence is that of Large ribosomal subunit protein bL17 from Rhodospirillum centenum (strain ATCC 51521 / SW).